Consider the following 38-residue polypeptide: Photosystem II reaction center protein L (38 aa).

Residues 17–37 (SLFWGLLLIFVLAVLFSSYFF) traverse the membrane as a helical segment.

This sequence belongs to the PsbL family. PSII is composed of 1 copy each of membrane proteins PsbA, PsbB, PsbC, PsbD, PsbE, PsbF, PsbH, PsbI, PsbJ, PsbK, PsbL, PsbM, PsbT, PsbY, PsbZ, Psb30/Ycf12, at least 3 peripheral proteins of the oxygen-evolving complex and a large number of cofactors. It forms dimeric complexes.

It localises to the plastid. Its subcellular location is the chloroplast thylakoid membrane. In terms of biological role, one of the components of the core complex of photosystem II (PSII). PSII is a light-driven water:plastoquinone oxidoreductase that uses light energy to abstract electrons from H(2)O, generating O(2) and a proton gradient subsequently used for ATP formation. It consists of a core antenna complex that captures photons, and an electron transfer chain that converts photonic excitation into a charge separation. This subunit is found at the monomer-monomer interface and is required for correct PSII assembly and/or dimerization. This chain is Photosystem II reaction center protein L, found in Cyanidium caldarium (Red alga).